Here is a 792-residue protein sequence, read N- to C-terminus: Replication factor A (792 aa).

DNA-binding regions (OB) lie at residues 81 to 140, 192 to 273, 301 to 365, and 422 to 494; these read VTGR…IRIK, VNVI…TSLT, VTVM…ANVE, and VDVV…VELS. The C4-type zinc finger occupies 678 to 696; that stretch reads CPSCNERLDLSDENICNFC.

Probably binds DNA polymerase PolB. Binds helicase Hel308, in presence and absence of DNA.

Its function is as follows. Inhibits DNA polymerase activity of PolB, which can be overcome by RFC and PNCA. Stimulates 3'-to 5'-exonuclease activity of PolB at 30 degrees Celsius, but has no effect at 50 or 70 degrees Celsius. Bind ssDNA and replication forks; replication forks structures bind both Hel308 and this protein. Has no effect on helicase activity of Hel308; may help target the helicase to DNA substrates that require DNA re-modeling. The polypeptide is Replication factor A (rpa) (Methanothermobacter thermautotrophicus (strain ATCC 29096 / DSM 1053 / JCM 10044 / NBRC 100330 / Delta H) (Methanobacterium thermoautotrophicum)).